Consider the following 335-residue polypeptide: Probable nicotianamine synthase 2 (335 aa).

This sequence belongs to the nicotianamine synthase (NAS)-like family.

The enzyme catalyses 3 S-adenosyl-L-methionine = nicotianamine + 3 S-methyl-5'-thioadenosine + 3 H(+). Functionally, synthesizes nicotianamine, a polyamine that is the first intermediate in the synthesis of the phytosiderophores of the mugineic acid type found in gramineae which serves as a sensor for the physiological iron status within the plant, and/or might be involved in the transport of iron. The chain is Probable nicotianamine synthase 2 (NAS2) from Hordeum vulgare (Barley).